The sequence spans 145 residues: D-aminoacyl-tRNA deacylase (145 aa).

A Gly-cisPro motif, important for rejection of L-amino acids motif is present at residues 137–138 (GP).

It belongs to the DTD family. As to quaternary structure, homodimer.

The protein localises to the cytoplasm. It catalyses the reaction glycyl-tRNA(Ala) + H2O = tRNA(Ala) + glycine + H(+). The catalysed reaction is a D-aminoacyl-tRNA + H2O = a tRNA + a D-alpha-amino acid + H(+). Its function is as follows. An aminoacyl-tRNA editing enzyme that deacylates mischarged D-aminoacyl-tRNAs. Also deacylates mischarged glycyl-tRNA(Ala), protecting cells against glycine mischarging by AlaRS. Acts via tRNA-based rather than protein-based catalysis; rejects L-amino acids rather than detecting D-amino acids in the active site. By recycling D-aminoacyl-tRNA to D-amino acids and free tRNA molecules, this enzyme counteracts the toxicity associated with the formation of D-aminoacyl-tRNA entities in vivo and helps enforce protein L-homochirality. The chain is D-aminoacyl-tRNA deacylase from Lactobacillus gasseri (strain ATCC 33323 / DSM 20243 / BCRC 14619 / CIP 102991 / JCM 1131 / KCTC 3163 / NCIMB 11718 / NCTC 13722 / AM63).